Here is a 291-residue protein sequence, read N- to C-terminus: 29 kDa ribonucleoprotein B, chloroplastic (291 aa).

The RRM 1 domain maps to 87-165; that stretch reads LKLFVGNLPF…RAIRVNAGPA (79 aa). The disordered stretch occupies residues 164–202; the sequence is PAPAKRENSSFGGGRGGNSSYGGGRDGNSSFGGARGGRS. A linker (Gly-rich) region spans residues 166-206; it reads PAKRENSSFGGGRGGNSSYGGGRDGNSSFGGARGGRSVDSS. The segment covering 174–189 has biased composition (gly residues); that stretch reads FGGGRGGNSSYGGGRD. Residues 207-285 enclose the RRM 2 domain; it reads NRVYVGNLSW…RSIRVSAAEE (79 aa).

It is found in the plastid. Its subcellular location is the chloroplast. In terms of biological role, could be involved in splicing and/or processing of chloroplast RNA's. The protein is 29 kDa ribonucleoprotein B, chloroplastic of Nicotiana sylvestris (Wood tobacco).